The sequence spans 133 residues: Small ribosomal subunit protein uS11 (133 aa).

Belongs to the universal ribosomal protein uS11 family. As to quaternary structure, part of the 30S ribosomal subunit. Interacts with proteins S7 and S18. Binds to IF-3.

In terms of biological role, located on the platform of the 30S subunit, it bridges several disparate RNA helices of the 16S rRNA. Forms part of the Shine-Dalgarno cleft in the 70S ribosome. In Brevibacillus brevis (strain 47 / JCM 6285 / NBRC 100599), this protein is Small ribosomal subunit protein uS11.